The sequence spans 289 residues: Glucose and ribitol dehydrogenase homolog 2 (289 aa).

Positions 1-32 are disordered; the sequence is MASGFPPQKQETQPGIQHVMEPTPEFSSSNYK. 43–67 serves as a coordination point for NAD(+); sequence LVTGGDSGIGKAVCHCYALEGASVA. Serine 180 serves as a coordination point for substrate. The active-site Proton acceptor is the tyrosine 193.

The protein belongs to the short-chain dehydrogenases/reductases (SDR) family.

In terms of biological role, may act as a short alcohol-polyol-sugar dehydrogenase possibly related to carbohydrate metabolism and the acquisition of desiccation tolerance. May also be involved in signal transduction. This chain is Glucose and ribitol dehydrogenase homolog 2, found in Arabidopsis thaliana (Mouse-ear cress).